The primary structure comprises 448 residues: NADP-specific glutamate dehydrogenase (448 aa).

Lysine 88, glutamine 109, and lysine 112 together coordinate substrate. Lysine 124 acts as the Proton donor in catalysis. Glycine 163 provides a ligand contact to substrate. Threonine 207 and asparagine 238 together coordinate NADP(+). Substrate is bound at residue serine 375.

Belongs to the Glu/Leu/Phe/Val dehydrogenases family. In terms of assembly, homohexamer.

It carries out the reaction L-glutamate + NADP(+) + H2O = 2-oxoglutarate + NH4(+) + NADPH + H(+). In terms of biological role, catalyzes the reversible oxidative deamination of glutamate to alpha-ketoglutarate and ammonia. This chain is NADP-specific glutamate dehydrogenase (gdhA), found in Psychrobacter sp. (strain TAD1).